The following is a 558-amino-acid chain: Receptor-like kinase LIP2 (558 aa).

The tract at residues 1-45 (MHCFPCFSSPKNKKSSTTNETNDNNEPKPDDRRRAEETEEIEQSE) is disordered. The span at 15-24 (SSTTNETNDN) shows a compositional bias: low complexity. A compositionally biased stretch (basic and acidic residues) spans 25-36 (NEPKPDDRRRAE). The residue at position 53 (Thr-53) is a Phosphothreonine. The 280-residue stretch at 64 to 343 (FRQECLLGEG…SDVMVALSFL (280 aa)) folds into the Protein kinase domain. ATP is bound by residues 70 to 78 (LGEGGFGRV) and Lys-93. Tyr-138 is subject to Phosphotyrosine. Asp-191 functions as the Proton acceptor in the catalytic mechanism. 2 positions are modified to phosphoserine: Ser-195 and Ser-227. Residue Thr-233 is modified to Phosphothreonine. Tyr-241 bears the Phosphotyrosine mark. Residues 372 to 558 (HDSNLVSPPP…SDVAIDSIKE (187 aa)) form a disordered region. Residues 401-418 (ESEKESVSKNEYKKKHEE) are compositionally biased toward basic and acidic residues. Over residues 419 to 431 (EDSSMESDDESDS) the composition is skewed to acidic residues. Over residues 432 to 448 (NSEHEKDQPPKPIDEKN) the composition is skewed to basic and acidic residues. Over residues 473 to 486 (SKSSQKSNDESTSS) the composition is skewed to low complexity. 3 stretches are compositionally biased toward basic and acidic residues: residues 488 to 500 (YDSD…KGKE), 508 to 524 (EEKH…KTDD), and 547 to 558 (IKSDVAIDSIKE).

It belongs to the protein kinase superfamily. Ser/Thr protein kinase family. In terms of assembly, interacts with PRK6. Palmitoylated. In terms of tissue distribution, expressed in mature pollen and in germinating pollen tubes.

The protein resides in the cell membrane. Its function is as follows. Involved in pollen tube guidance into micropyle. Participates in perception of the ovule-secreted peptide signal LURE1. The protein is Receptor-like kinase LIP2 of Arabidopsis thaliana (Mouse-ear cress).